Consider the following 328-residue polypeptide: MNSEKEDEPLEEIGDSNNVLDLTSYQLHSLDTVELPPNLIELDLTANRLSGLDSRIAQLSTLKKLSLRQNLIDDSAVEPLSHWDALSDLEELVLRDNKLAKVPDVSIFTKLLVYDISFNEITSLEGISKASSTLKELYVSKNEVNKIMEIEHLHNLQILELGSNRLRVMENLENFTKLEELWLGRNRIKVVNLCGLKCIKKISLQSNRLTSMKGFEECVALEELYLSHNGISKMEGLSALVNLRVLDVSNNKLTSVDDIQNLTKLEDLWLNDNQIESLEAITEAVTGSKEKLTTIYLENNPCAKSSDYVAAVRQIFPNVEQIDSNLFA.

LRR repeat units follow at residues 13–36, 37–59, 61–82, 86–110, 111–130, 131–153, 154–177, 179–196, 197–221, 223–240, 241–264, 266–287, and 289–312; these read IGDSNNVLDLTSYQLHSLDTVELP, PNLIELDLTANRLSGLDSRIAQL, TLKKLSLRQNLIDDSAVEPLSH, LSDLEELVLRDNKLAKVPDVSIFTK, LLVYDISFNEITSLEGISKA, SSTLKELYVSKNEVNKIMEIEHL, HNLQILELGSNRLRVMENLENFTK, EELWLGRNRIKVVNLCGL, KCIKKISLQSNRLTSMKGFEECVAL, ELYLSHNGISKMEGLSAL, VNLRVLDVSNNKLTSVDDIQNLTK, EDLWLNDNQIESLEAITEAVTG, and KEKLTTIYLENNPCAKSSDYVAAV.

As to quaternary structure, interacts with human protein phosphatase PPP1C.

Functionally, inhibitor of protein-phosphatase 1 (PP1). Binds to and inhibits PP1 activity. The protein is Protein phosphatase 1 regulatory inhibitor subunit PPP1R7 homolog of Arabidopsis thaliana (Mouse-ear cress).